A 904-amino-acid chain; its full sequence is Serine/arginine repetitive matrix protein 1 (904 aa).

Met-1 is subject to N-acetylmethionine. The necessary for DNA and RNA-binding stretch occupies residues 1-151 (MDAGFFRGTS…ASMKKQDEDK (151 aa)). A necessary for mRNA 3'-end cleavage and cytoplasmic accumulation region spans residues 1-156 (MDAGFFRGTS…QDEDKDKRDK (156 aa)). Arg-7 carries the post-translational modification Citrulline. The PWI domain occupies 27–126 (QLKFAECLEK…AGIPSAFLEL (100 aa)). A Glycyl lysine isopeptide (Lys-Gly) (interchain with G-Cter in SUMO2) cross-link involves residue Lys-127. Positions 139-170 (EKLASMKKQDEDKDKRDKEEKESSREKRERSR) are enriched in basic and acidic residues. Positions 139-904 (EKLASMKKQD…MRKAQVSPQS (766 aa)) are disordered. Lys-140 carries the post-translational modification N6-acetyllysine. The span at 171–207 (SPRRRKSRSPSPRRRSSPVRRERKRSHSRSPRHRTKS) shows a compositional bias: basic residues. Residues 214–234 (PEKKEKTPELPEPSVKVKEPS) are compositionally biased toward basic and acidic residues. Thr-220 carries the post-translational modification Phosphothreonine. The residue at position 227 (Ser-227) is a Phosphoserine. A Glycyl lysine isopeptide (Lys-Gly) (interchain with G-Cter in SUMO1); alternate cross-link involves residue Lys-231. Lys-231 participates in a covalent cross-link: Glycyl lysine isopeptide (Lys-Gly) (interchain with G-Cter in SUMO2); alternate. Phosphoserine occurs at positions 234 and 240. Thr-241 bears the Phosphothreonine mark. A compositionally biased stretch (basic and acidic residues) spans 246 to 275 (KVPKPEPIPEPKEPSPEKNSKKEKEKEKTR). Lys-249 participates in a covalent cross-link: Glycyl lysine isopeptide (Lys-Gly) (interchain with G-Cter in SUMO2). Ser-260 carries the phosphoserine modification. Basic residues-rich tracts occupy residues 276–329 (PRSR…RTPP) and 336–351 (PRHR…RRRS). The segment at 300–688 (RRHRSRSRSY…NKRHSPSPRP (389 aa)) is necessary for speckles and matrix localization. The span at 352 to 368 (SASLSGSSSSSSSSRSR) shows a compositional bias: low complexity. A phosphoserine mark is found at Ser-389, Ser-391, Ser-393, and Ser-402. Residue Thr-406 is modified to Phosphothreonine. At Ser-414 the chain carries Phosphoserine. Thr-416 is subject to Phosphothreonine. Ser-420, Ser-429, Ser-431, and Ser-436 each carry phosphoserine. The span at 428–438 (VSVSPGRTSGK) shows a compositional bias: polar residues. Lys-447 is covalently cross-linked (Glycyl lysine isopeptide (Lys-Gly) (interchain with G-Cter in SUMO2)). A phosphoserine mark is found at Ser-450 and Ser-452. Lys-459 participates in a covalent cross-link: Glycyl lysine isopeptide (Lys-Gly) (interchain with G-Cter in SUMO2). Residues Ser-463 and Ser-465 each carry the phosphoserine modification. A Glycyl lysine isopeptide (Lys-Gly) (interchain with G-Cter in SUMO2) cross-link involves residue Lys-472. Ser-478 is modified (phosphoserine). Over residues 478-501 (SVQQRRQYRRQNQQSSSDSGSSSS) the composition is skewed to low complexity. Basic and acidic residues predominate over residues 503–518 (EDERPKRSHVKNGEVG). 7 positions are modified to phosphoserine: Ser-524, Ser-526, Ser-528, Ser-530, Ser-532, Ser-549, and Ser-551. The segment covering 533–560 (PRKRQKETSPRGRRRRSPSPPPTRRRRS) has biased composition (basic residues). Thr-555 is modified (phosphothreonine). Ser-560 and Ser-562 each carry phosphoserine. Basic residues predominate over residues 567–592 (PRRRRTPTPPPRRRTPSPPPRRRSPS). A phosphothreonine mark is found at Thr-572, Thr-574, and Thr-581. A Phosphoserine modification is found at Ser-583. Over residues 593 to 605 (PRRYSPPIQRRYS) the composition is skewed to low complexity. Tyr-596 carries the post-translational modification Phosphotyrosine. A phosphoserine mark is found at Ser-597, Ser-605, and Ser-607. The residue at position 614 (Thr-614) is a Phosphothreonine. 5 positions are modified to phosphoserine: Ser-616, Ser-626, Ser-628, Ser-636, and Ser-638. Positions 621–636 (PKRRASPSPPPKRRVS) are enriched in basic residues. Over residues 649–663 (TKRRSPSLSSKHRKG) the composition is skewed to basic residues. A phosphoserine mark is found at Ser-694, Ser-695, Ser-696, Ser-705, Ser-707, Ser-713, and Ser-715. Composition is skewed to low complexity over residues 701–719 (RRGA…PSTR) and 736–759 (AASP…SPEP). Thr-718 carries the phosphothreonine modification. Ser-738, Ser-740, Ser-748, Ser-752, Ser-754, Ser-756, Ser-769, Ser-773, Ser-775, and Ser-777 each carry phosphoserine. Residues 771–786 (VQSQSPSTNWSPAVPV) show a composition bias toward low complexity. At Thr-778 the chain carries Phosphothreonine. 2 positions are modified to phosphoserine: Ser-781 and Ser-791. Residue Thr-793 is modified to Phosphothreonine. Phosphoserine occurs at positions 795, 797, and 802. A compositionally biased stretch (basic residues) spans 809–834 (KKKKKKKDKKHKKDKKHKKHKKHKKE). A compositionally biased stretch (low complexity) spans 837–866 (VAAAAAAAVTPAAIAAATTTLAQEEPVAAP). Lys-869 participates in a covalent cross-link: Glycyl lysine isopeptide (Lys-Gly) (interchain with G-Cter in SUMO2). Thr-872 carries the post-translational modification Phosphothreonine. At Ser-874 the chain carries Phosphoserine. Residues 882-892 (DLEKHLREKAL) show a composition bias toward basic and acidic residues. Residue Ser-901 is modified to Phosphoserine.

This sequence belongs to the splicing factor SR family. As to quaternary structure, identified in the spliceosome C complex. Found in a pre-mRNA splicing complex with SFRS4, SFRS5, SNRP70, SNRPA1, SRRM1 and SRRM2. Found in a pre-mRNA exonic splicing enhancer (ESE) complex with SNRP70, SNRPA1, SRRM1 and TRA2B/SFRS10. Component of the minor spliceosome, which splices U12-type introns. Found in a mRNA splicing-dependent exon junction complex (EJC) with DEK, PRPF8, NCBP1, RBM8A, RNPS1, SRRM1 and ALYREF/THOC4. Interacts with DDX39B, CPSF1, RBM8A, RNPS1, and ALYREF/THOC4. Seems to be a compound of RNA export complexes that are released from speckles in a ATP-dependent manner. In terms of processing, phosphorylated on multiple serine and threonine residues by DYRK3 during the G2-to-M transition, after the nuclear-envelope breakdown. Phosphorylation by DYRK3 promotes disassembly of nuclear speckles. Citrullinated by PADI4.

It is found in the nucleus matrix. It localises to the nucleus speckle. Part of pre- and post-splicing multiprotein mRNP complexes. As a component of the minor spliceosome, involved in the splicing of U12-type introns in pre-mRNAs. Involved in numerous pre-mRNA processing events. Promotes constitutive and exonic splicing enhancer (ESE)-dependent splicing activation by bridging together sequence-specific (SR family proteins, SFRS4, SFRS5 and TRA2B/SFRS10) and basal snRNP (SNRP70 and SNRPA1) factors of the spliceosome. Stimulates mRNA 3'-end cleavage independently of the formation of an exon junction complex. Binds both pre-mRNA and spliced mRNA 20-25 nt upstream of exon-exon junctions. Binds RNA and DNA with low sequence specificity and has similar preference for either double- or single-stranded nucleic acid substrates. This Homo sapiens (Human) protein is Serine/arginine repetitive matrix protein 1 (SRRM1).